We begin with the raw amino-acid sequence, 417 residues long: Putative plant UBX domain-containing protein 14 (417 aa).

Residues 335-415 (DRSVVCSICV…GIANSMISVT (81 aa)) form the UBX domain.

This is Putative plant UBX domain-containing protein 14 from Arabidopsis thaliana (Mouse-ear cress).